We begin with the raw amino-acid sequence, 360 residues long: Magnesium-protoporphyrin IX monomethyl ester [oxidative] cyclase (360 aa).

It belongs to the AcsF family. Fe cation serves as cofactor.

It carries out the reaction Mg-protoporphyrin IX 13-monomethyl ester + 3 NADPH + 3 O2 + 2 H(+) = 3,8-divinyl protochlorophyllide a + 3 NADP(+) + 5 H2O. It functions in the pathway porphyrin-containing compound metabolism; chlorophyll biosynthesis (light-independent). In terms of biological role, catalyzes the formation of the isocyclic ring in chlorophyll biosynthesis. Mediates the cyclase reaction, which results in the formation of divinylprotochlorophyllide (Pchlide) characteristic of all chlorophylls from magnesium-protoporphyrin IX 13-monomethyl ester (MgPMME). The protein is Magnesium-protoporphyrin IX monomethyl ester [oxidative] cyclase of Synechococcus sp. (strain WH7803).